A 234-amino-acid chain; its full sequence is Large ribosomal subunit protein uL1 (234 aa).

Belongs to the universal ribosomal protein uL1 family. As to quaternary structure, part of the 50S ribosomal subunit.

Its function is as follows. Binds directly to 23S rRNA. The L1 stalk is quite mobile in the ribosome, and is involved in E site tRNA release. In terms of biological role, protein L1 is also a translational repressor protein, it controls the translation of the L11 operon by binding to its mRNA. This Serratia marcescens protein is Large ribosomal subunit protein uL1.